The following is a 191-amino-acid chain: Large ribosomal subunit protein uL5 (191 aa).

The protein belongs to the universal ribosomal protein uL5 family. As to quaternary structure, part of the 50S ribosomal subunit; part of the 5S rRNA/L5/L18/L25 subcomplex. Contacts the 5S rRNA and the P site tRNA. Forms a bridge to the 30S subunit in the 70S ribosome.

Functionally, this is one of the proteins that bind and probably mediate the attachment of the 5S RNA into the large ribosomal subunit, where it forms part of the central protuberance. In the 70S ribosome it contacts protein S13 of the 30S subunit (bridge B1b), connecting the 2 subunits; this bridge is implicated in subunit movement. Contacts the P site tRNA; the 5S rRNA and some of its associated proteins might help stabilize positioning of ribosome-bound tRNAs. The chain is Large ribosomal subunit protein uL5 from Micrococcus luteus (Micrococcus lysodeikticus).